Reading from the N-terminus, the 420-residue chain is Nucleobindin-2 (420 aa).

The first 24 residues, 1 to 24 (MRWRTILLQYCFLLITCLLTALEA), serve as a signal peptide directing secretion. Residues 171-223 (KTRHEEFKKYEMMKEHERREYLKTLNEEKRKEEESKFEEMKKKHENHPKVNHP) mediate DNA binding. The span at 195–212 (LNEEKRKEEESKFEEMKK) shows a compositional bias: basic and acidic residues. Positions 195–225 (LNEEKRKEEESKFEEMKKKHENHPKVNHPGS) are disordered. The binds to necdin stretch occupies residues 213 to 420 (KHENHPKVNH…AGELKFEPHI (208 aa)). 2 EF-hand domains span residues 241–276 (PNDF…ELEK) and 293–328 (ERLR…KEFL). Ca(2+)-binding residues include D254 and N256. Position 257 is a phosphoserine (S257). The Ca(2+) site is built by D258, E265, D306, N308, D310, and E317. Residues 304 to 334 (EVDTNKDRLVTLEEFLKATEKKEFLEPDSWE) carry the GBA motif. Residue S332 is modified to Phosphoserine. The tract at residues 398-420 (QKKLQQGIPPSGPAGELKFEPHI) is disordered.

This sequence belongs to the nucleobindin family. Interacts (via GBA motif) with guanine nucleotide-binding protein G(i) alpha subunit GNAI3. Preferentially interacts with inactive rather than active GNAI3. Interaction with GNAI3 is inhibited when NUCB2 binds calcium, probably due to a conformational change which renders the GBA motif inaccessible. Binds to the postmitotic growth suppressor NDN; coexpression abolishes NUCB2 secretion. Interacts with MC4R. In terms of tissue distribution, predominantly expressed in spleen, testis and normal stomach.

Its subcellular location is the golgi apparatus. It is found in the membrane. The protein resides in the cytoplasm. It localises to the secreted. The protein localises to the endoplasmic reticulum. Its subcellular location is the nucleus envelope. In terms of biological role, calcium-binding protein which may have a role in calcium homeostasis. Acts as a non-receptor guanine nucleotide exchange factor which binds to and activates guanine nucleotide-binding protein (G-protein) alpha subunit GNAI3. Its function is as follows. Anorexigenic peptide, seems to play an important role in hypothalamic pathways regulating food intake and energy homeostasis, acting in a leptin-independent manner. May also exert hypertensive roles and modulate blood pressure through directly acting on peripheral arterial resistance. In intestinal epithelial cells, plays a role in the inhibition of hepatic glucose production via MC4R receptor leading to increased cyclic adenosine monophosphate (cAMP) levels and glucagon-like peptide 1 (GLP-1) secretion. The chain is Nucleobindin-2 from Homo sapiens (Human).